The sequence spans 360 residues: NADP-dependent alcohol dehydrogenase 6 (360 aa).

Residue Cys-46 participates in Zn(2+) binding. Gly-47 and His-51 together coordinate NADP(+). His-68, Cys-100, Cys-103, Cys-106, and Cys-114 together coordinate Zn(2+). Position 131 is a phosphoserine (Ser-131). Cys-163 lines the Zn(2+) pocket. Leu-188, Gly-190, Ile-191, Ser-210, Arg-211, Lys-215, Cys-250, Ser-252, Thr-255, Asp-256, Ile-275, Ile-277, Tyr-298, Ser-299, Leu-301, and Arg-348 together coordinate NADP(+). The residue at position 359 (Ser-359) is a Phosphoserine.

It belongs to the zinc-containing alcohol dehydrogenase family. In terms of assembly, homodimer. It depends on Zn(2+) as a cofactor.

It is found in the cytoplasm. The protein resides in the nucleus. The enzyme catalyses a primary alcohol + NADP(+) = an aldehyde + NADPH + H(+). It catalyses the reaction (E)-cinnamyl alcohol + NADP(+) = (E)-cinnamaldehyde + NADPH + H(+). The catalysed reaction is hexan-1-ol + NADP(+) = hexanal + NADPH + H(+). It carries out the reaction 3-methylbutanol + NADP(+) = 3-methylbutanal + NADPH + H(+). The enzyme catalyses S-nitroso-CoA + NADPH + H(+) = sulfinamide-CoA + NADP(+). In terms of biological role, NADP-dependent, medium-chain alcohol dehydrogenase with a broad substrate specificity. Aldehydes exhibited 50-12000 times higher catalytic efficiency than the corresponding alcohols, therefore the major function of the enzyme is as an aldehyde reductase. The enzyme is active towards aromatic and aliphatic (linear and branched-chain) aldehydes. The enzyme is very active towards aromatic aldehydes, such as cinnamaldehyde, benzaldehyde and substituted benzaldehydes, such as veratraldehyde and panisaldehyde. It exhibits low activity towards substituted cinnamaldehydes, such as coniferaldehyde and sinapaldehyde. The enzyme has no activity with ketones, such as acetone or cyclohexanone. For the reverse reaction, linear and branched-chain primary alcohols are substrates, whereas very low activity is found with secondary alcohols, such as butan-2-ol. The enzyme may be physiologically involved in several steps of the lignin degradation pathway, initiated by other microorganisms, in the synthesis of fusel alcohols, products derived from the aminoacidic metabolism, and in the homeostasis of NADP(H). Has the ability to reduce 5-hydroxymethyl furfural (HMF), a furan derivative which is formed during the hydrolysis of lignocellulosic materials, to 5-hydroxymethylfurfuryl alcohol, thereby alleviating the inhibition of the fermentation of lignocellulose hydrolysates by HMF during fuel ethanol production. Also acts as an inhibitor of protein S-nitrosylation by mediating degradation of S-nitroso-coenzyme A (S-nitroso-CoA), a cofactor required to S-nitrosylate proteins. The polypeptide is NADP-dependent alcohol dehydrogenase 6 (Saccharomyces cerevisiae (strain ATCC 204508 / S288c) (Baker's yeast)).